The sequence spans 263 residues: Small ribosomal subunit protein uS2 (263 aa).

Ser-2 carries the post-translational modification N-acetylserine. Residues 211–242 show a composition bias toward acidic residues; sequence EQTAEEEAEAAEGAEFEVEEEEVEQEWQEPAE. A disordered region spans residues 211 to 263; that stretch reads EQTAEEEAEAAEGAEFEVEEEEVEQEWQEPAEADWNASAPPADWNDAANAEAF. Over residues 246-263 the composition is skewed to low complexity; it reads NASAPPADWNDAANAEAF.

This sequence belongs to the universal ribosomal protein uS2 family. In terms of assembly, component of the small ribosomal subunit. Mature ribosomes consist of a small (40S) and a large (60S) subunit. The 40S subunit contains about 33 different proteins and 1 molecule of RNA (18S). The 60S subunit contains about 49 different proteins and 3 molecules of RNA (25S, 5.8S and 5S). Interacts with RPS21.

The protein resides in the cytoplasm. In terms of biological role, required for the assembly and/or stability of the 40S ribosomal subunit. Required for the processing of the 20S rRNA-precursor to mature 18S rRNA in a late step of the maturation of 40S ribosomal subunits. This chain is Small ribosomal subunit protein uS2, found in Komagataella phaffii (strain GS115 / ATCC 20864) (Yeast).